The following is a 136-amino-acid chain: Small ribosomal subunit protein uS19 (136 aa).

The interval 114–136 is disordered; the sequence is RSRVSHGSAGVGATRSSKFVPLK.

Belongs to the universal ribosomal protein uS19 family.

Functionally, protein S19 forms a complex with S13 that binds strongly to the 16S ribosomal RNA. This is Small ribosomal subunit protein uS19 from Methanosarcina acetivorans (strain ATCC 35395 / DSM 2834 / JCM 12185 / C2A).